We begin with the raw amino-acid sequence, 209 residues long: MIGLVGKKVGMTRIFTEDGVSIPVTVIEIEANRVTQVKDLANDGYRAVQVTAGAKKANRVTKPEAGHFAKAGVEAGRTLREFRLSEGEEFTVGQSISVEIFADIKKVDVTGTSKGKGFAGTVKRWNFRTQDATHGNSLSHRAPGSIGQNQTPGKVFKGKKMAGQLGNERVTVQSLDVVRVDAERNLLLVKGAVPGATGSDLIVKPAVKA.

Positions 133 to 153 (THGNSLSHRAPGSIGQNQTPG) are disordered. An N5-methylglutamine modification is found at Gln-150.

The protein belongs to the universal ribosomal protein uL3 family. Part of the 50S ribosomal subunit. Forms a cluster with proteins L14 and L19. In terms of processing, methylated by PrmB.

One of the primary rRNA binding proteins, it binds directly near the 3'-end of the 23S rRNA, where it nucleates assembly of the 50S subunit. In Pectobacterium atrosepticum (strain SCRI 1043 / ATCC BAA-672) (Erwinia carotovora subsp. atroseptica), this protein is Large ribosomal subunit protein uL3.